A 127-amino-acid chain; its full sequence is MKIVVTSIFVQDQDMALEFYTEKLGFIKKEDVPMGKFRWITLVSPDDQDGTELLLEPNEHPAAKEYQKKIFSEGLPATMFGVADIQKEYNRLKEKGVTFTTEPTKMGEVTIAVFDDTCGNLIQIVQK.

The VOC domain maps to 1–127 (MKIVVTSIFV…CGNLIQIVQK (127 aa)).

Belongs to the glyoxalase I family.

This is an uncharacterized protein from Bacillus subtilis (strain 168).